Here is a 566-residue protein sequence, read N- to C-terminus: Oxygen-dependent choline dehydrogenase (566 aa).

FAD is bound at residue 7 to 36 (DYIICGAGSAGNVLATRLTEDPNVTVLLLE). The tract at residues 183-203 (QQEGFGPMDRTVTPKGRRAST) is disordered. His474 acts as the Proton acceptor in catalysis.

Belongs to the GMC oxidoreductase family. FAD is required as a cofactor.

It catalyses the reaction choline + A = betaine aldehyde + AH2. The enzyme catalyses betaine aldehyde + NAD(+) + H2O = glycine betaine + NADH + 2 H(+). The protein operates within amine and polyamine biosynthesis; betaine biosynthesis via choline pathway; betaine aldehyde from choline (cytochrome c reductase route): step 1/1. In terms of biological role, involved in the biosynthesis of the osmoprotectant glycine betaine. Catalyzes the oxidation of choline to betaine aldehyde and betaine aldehyde to glycine betaine at the same rate. The polypeptide is Oxygen-dependent choline dehydrogenase (Burkholderia ambifaria (strain ATCC BAA-244 / DSM 16087 / CCUG 44356 / LMG 19182 / AMMD) (Burkholderia cepacia (strain AMMD))).